The following is a 434-amino-acid chain: Ataxin-10 homolog (434 aa).

This sequence belongs to the ataxin-10 family.

Its subcellular location is the cytoplasm. The protein resides in the nucleus. Functionally, may play a role in the regulation of cytokinesis. The polypeptide is Ataxin-10 homolog (mug160) (Schizosaccharomyces pombe (strain 972 / ATCC 24843) (Fission yeast)).